Consider the following 120-residue polypeptide: Large ribosomal subunit protein bL19 (120 aa).

Belongs to the bacterial ribosomal protein bL19 family.

This protein is located at the 30S-50S ribosomal subunit interface and may play a role in the structure and function of the aminoacyl-tRNA binding site. In Geobacillus kaustophilus (strain HTA426), this protein is Large ribosomal subunit protein bL19.